Reading from the N-terminus, the 80-residue chain is Exodeoxyribonuclease 7 small subunit (80 aa).

Belongs to the XseB family. Heterooligomer composed of large and small subunits.

The protein localises to the cytoplasm. It catalyses the reaction Exonucleolytic cleavage in either 5'- to 3'- or 3'- to 5'-direction to yield nucleoside 5'-phosphates.. In terms of biological role, bidirectionally degrades single-stranded DNA into large acid-insoluble oligonucleotides, which are then degraded further into small acid-soluble oligonucleotides. The chain is Exodeoxyribonuclease 7 small subunit from Erwinia tasmaniensis (strain DSM 17950 / CFBP 7177 / CIP 109463 / NCPPB 4357 / Et1/99).